The primary structure comprises 544 residues: Membrane protein insertase YidC (544 aa).

Helical transmembrane passes span 6–26 (NILL…WQTD), 345–365 (LLMF…LITL), 423–443 (GGCL…WVLL), 460–480 (LSVQ…MFVM), and 503–523 (VVFT…WLVG).

This sequence belongs to the OXA1/ALB3/YidC family. Type 1 subfamily. In terms of assembly, interacts with the Sec translocase complex via SecD. Specifically interacts with transmembrane segments of nascent integral membrane proteins during membrane integration.

It is found in the cell inner membrane. Functionally, required for the insertion and/or proper folding and/or complex formation of integral membrane proteins into the membrane. Involved in integration of membrane proteins that insert both dependently and independently of the Sec translocase complex, as well as at least some lipoproteins. Aids folding of multispanning membrane proteins. The protein is Membrane protein insertase YidC of Shewanella woodyi (strain ATCC 51908 / MS32).